The sequence spans 107 residues: Small ribosomal subunit protein bS18 (107 aa).

This sequence belongs to the bacterial ribosomal protein bS18 family. In terms of assembly, part of the 30S ribosomal subunit. Forms a tight heterodimer with protein bS6.

Functionally, binds as a heterodimer with protein bS6 to the central domain of the 16S rRNA, where it helps stabilize the platform of the 30S subunit. The sequence is that of Small ribosomal subunit protein bS18 from Mycoplasmopsis agalactiae (strain NCTC 10123 / CIP 59.7 / PG2) (Mycoplasma agalactiae).